The chain runs to 389 residues: snRNA-activating protein complex subunit 1 (389 aa).

The span at 1-15 shows a compositional bias: low complexity; the sequence is MGTPAGAGTRPTGAG. Disordered regions lie at residues 1–22, 245–276, and 290–389; these read MGTP…GVGI, WHKE…ERCE, and SAVV…KRKC. The SNAPC3-binding stretch occupies residues 20–187; the sequence is VGIPPGLQTD…QKFKDPNDRV (168 aa). Residues 183–287 form an SNAPC4-binding region; sequence PNDRVMKLIT…AVSLAKIKAK (105 aa). Over residues 245 to 262 the composition is skewed to basic and acidic residues; it reads WHKERKNPSLKPKLKDGE. Residues S308 and S309 each carry the phosphoserine modification.

As to quaternary structure, part of the SNAPc complex composed of 5 subunits: SNAPC1, SNAPC2, SNAPC3, SNAPC4 and SNAPC5. SNAPC1 interacts with SNAPC3, SNAPC4 and TBP.

It is found in the nucleus. In terms of biological role, part of the SNAPc complex required for the transcription of both RNA polymerase II and III small-nuclear RNA genes. Binds to the proximal sequence element (PSE), a non-TATA-box basal promoter element common to these 2 types of genes. Recruits TBP and BRF2 to the U6 snRNA TATA box. The protein is snRNA-activating protein complex subunit 1 (Snapc1) of Mus musculus (Mouse).